The following is an 879-amino-acid chain: Alanine--tRNA ligase (879 aa).

Zn(2+) is bound by residues His566, His570, Cys668, and His672.

Belongs to the class-II aminoacyl-tRNA synthetase family. The cofactor is Zn(2+).

The protein resides in the cytoplasm. It carries out the reaction tRNA(Ala) + L-alanine + ATP = L-alanyl-tRNA(Ala) + AMP + diphosphate. In terms of biological role, catalyzes the attachment of alanine to tRNA(Ala) in a two-step reaction: alanine is first activated by ATP to form Ala-AMP and then transferred to the acceptor end of tRNA(Ala). Also edits incorrectly charged Ser-tRNA(Ala) and Gly-tRNA(Ala) via its editing domain. The sequence is that of Alanine--tRNA ligase from Clostridium botulinum (strain Hall / ATCC 3502 / NCTC 13319 / Type A).